A 150-amino-acid polypeptide reads, in one-letter code: Deoxyuridine 5'-triphosphate nucleotidohydrolase (150 aa).

Substrate is bound by residues 67–69, asparagine 80, and 84–86; these read RSS and VID.

The protein belongs to the dUTPase family. The cofactor is Mg(2+).

The enzyme catalyses dUTP + H2O = dUMP + diphosphate + H(+). Its pathway is pyrimidine metabolism; dUMP biosynthesis; dUMP from dCTP (dUTP route): step 2/2. In terms of biological role, this enzyme is involved in nucleotide metabolism: it produces dUMP, the immediate precursor of thymidine nucleotides and it decreases the intracellular concentration of dUTP so that uracil cannot be incorporated into DNA. The polypeptide is Deoxyuridine 5'-triphosphate nucleotidohydrolase (dut) (Lactococcus lactis subsp. lactis (strain IL1403) (Streptococcus lactis)).